Consider the following 310-residue polypeptide: tRNA uridine(34) hydroxylase (310 aa).

The region spanning lysine 127 to serine 225 is the Rhodanese domain. Cysteine 185 acts as the Cysteine persulfide intermediate in catalysis.

It belongs to the TrhO family.

It carries out the reaction uridine(34) in tRNA + AH2 + O2 = 5-hydroxyuridine(34) in tRNA + A + H2O. In terms of biological role, catalyzes oxygen-dependent 5-hydroxyuridine (ho5U) modification at position 34 in tRNAs. This Prochlorococcus marinus (strain MIT 9515) protein is tRNA uridine(34) hydroxylase.